Here is a 380-residue protein sequence, read N- to C-terminus: Queuine tRNA-ribosyltransferase (380 aa).

Residue aspartate 96 is the Proton acceptor of the active site. Residues 96–100, aspartate 150, glutamine 193, and glycine 220 each bind substrate; that span reads DSGGF. The RNA binding stretch occupies residues 251 to 257; the sequence is GVGAPDS. Aspartate 270 acts as the Nucleophile in catalysis. The tract at residues 275–279 is RNA binding; important for wobble base 34 recognition; it reads TRIAR. Zn(2+)-binding residues include cysteine 308, cysteine 310, cysteine 313, and histidine 339.

Belongs to the queuine tRNA-ribosyltransferase family. In terms of assembly, homodimer. Within each dimer, one monomer is responsible for RNA recognition and catalysis, while the other monomer binds to the replacement base PreQ1. Requires Zn(2+) as cofactor.

The catalysed reaction is 7-aminomethyl-7-carbaguanine + guanosine(34) in tRNA = 7-aminomethyl-7-carbaguanosine(34) in tRNA + guanine. It functions in the pathway tRNA modification; tRNA-queuosine biosynthesis. In terms of biological role, catalyzes the base-exchange of a guanine (G) residue with the queuine precursor 7-aminomethyl-7-deazaguanine (PreQ1) at position 34 (anticodon wobble position) in tRNAs with GU(N) anticodons (tRNA-Asp, -Asn, -His and -Tyr). Catalysis occurs through a double-displacement mechanism. The nucleophile active site attacks the C1' of nucleotide 34 to detach the guanine base from the RNA, forming a covalent enzyme-RNA intermediate. The proton acceptor active site deprotonates the incoming PreQ1, allowing a nucleophilic attack on the C1' of the ribose to form the product. After dissociation, two additional enzymatic reactions on the tRNA convert PreQ1 to queuine (Q), resulting in the hypermodified nucleoside queuosine (7-(((4,5-cis-dihydroxy-2-cyclopenten-1-yl)amino)methyl)-7-deazaguanosine). The sequence is that of Queuine tRNA-ribosyltransferase from Streptococcus pyogenes serotype M3 (strain ATCC BAA-595 / MGAS315).